The chain runs to 325 residues: Acetyl-coenzyme A carboxylase carboxyl transferase subunit alpha (325 aa).

The region spanning 35 to 292 is the CoA carboxyltransferase C-terminal domain; it reads EIEKLEARLT…DRVLRASLKQ (258 aa).

This sequence belongs to the AccA family. In terms of assembly, acetyl-CoA carboxylase is a heterohexamer composed of biotin carboxyl carrier protein (AccB), biotin carboxylase (AccC) and two subunits each of ACCase subunit alpha (AccA) and ACCase subunit beta (AccD).

It localises to the cytoplasm. It catalyses the reaction N(6)-carboxybiotinyl-L-lysyl-[protein] + acetyl-CoA = N(6)-biotinyl-L-lysyl-[protein] + malonyl-CoA. It functions in the pathway lipid metabolism; malonyl-CoA biosynthesis; malonyl-CoA from acetyl-CoA: step 1/1. Component of the acetyl coenzyme A carboxylase (ACC) complex. First, biotin carboxylase catalyzes the carboxylation of biotin on its carrier protein (BCCP) and then the CO(2) group is transferred by the carboxyltransferase to acetyl-CoA to form malonyl-CoA. This is Acetyl-coenzyme A carboxylase carboxyl transferase subunit alpha from Geobacillus thermodenitrificans (strain NG80-2).